A 318-amino-acid chain; its full sequence is Transaldolase (318 aa).

Lys132 functions as the Schiff-base intermediate with substrate in the catalytic mechanism.

Belongs to the transaldolase family. Type 1 subfamily. Homodimer.

It is found in the cytoplasm. It catalyses the reaction D-sedoheptulose 7-phosphate + D-glyceraldehyde 3-phosphate = D-erythrose 4-phosphate + beta-D-fructose 6-phosphate. Its pathway is carbohydrate degradation; pentose phosphate pathway; D-glyceraldehyde 3-phosphate and beta-D-fructose 6-phosphate from D-ribose 5-phosphate and D-xylulose 5-phosphate (non-oxidative stage): step 2/3. Functionally, transaldolase is important for the balance of metabolites in the pentose-phosphate pathway. The chain is Transaldolase from Shewanella loihica (strain ATCC BAA-1088 / PV-4).